The following is a 201-amino-acid chain: Fas apoptotic inhibitory molecule 1 (201 aa).

This sequence belongs to the FAIM1 family.

The protein localises to the cytoplasm. Its function is as follows. Plays a role as an inducible effector molecule that mediates Fas resistance produced by surface Ig engagement in B cells. The polypeptide is Fas apoptotic inhibitory molecule 1 (FAIM) (Bos taurus (Bovine)).